The chain runs to 184 residues: Ribosome maturation factor RimM (184 aa).

Residues 106–184 (PGDYYWYQLE…RMIVDWDPEF (79 aa)) enclose the PRC barrel domain.

This sequence belongs to the RimM family. In terms of assembly, binds ribosomal protein uS19.

Its subcellular location is the cytoplasm. Its function is as follows. An accessory protein needed during the final step in the assembly of 30S ribosomal subunit, possibly for assembly of the head region. Essential for efficient processing of 16S rRNA. May be needed both before and after RbfA during the maturation of 16S rRNA. It has affinity for free ribosomal 30S subunits but not for 70S ribosomes. The sequence is that of Ribosome maturation factor RimM from Chromohalobacter salexigens (strain ATCC BAA-138 / DSM 3043 / CIP 106854 / NCIMB 13768 / 1H11).